A 2091-amino-acid chain; its full sequence is Protein Ycf2 (2091 aa).

Residues 191–210 (DSSQLKGSSDQSRDPLDSIS) form a disordered region. Residue 1432–1439 (GSIGTGRS) coordinates ATP.

It belongs to the Ycf2 family.

The protein resides in the plastid. It localises to the chloroplast stroma. Probable ATPase of unknown function. Its presence in a non-photosynthetic plant (Epifagus virginiana) and experiments in tobacco indicate that it has an essential function which is probably not related to photosynthesis. This Daucus carota (Wild carrot) protein is Protein Ycf2.